Reading from the N-terminus, the 1249-residue chain is Hyphally regulated cell wall protein 3 (1249 aa).

A signal peptide spans 1–20 (MHLFKRIALTLWLIISSTLA). Asn373 carries an N-linked (GlcNAc...) asparagine glycan. The segment covering 383 to 415 (FPTTSQSSSSETVASSSQPDSSSTEPSAFPSST) has biased composition (low complexity). Disordered stretches follow at residues 383 to 729 (FPTT…SGII) and 883 to 1217 (GLST…SSAS). Over residues 416–428 (GDSSAEPSITSDY) the composition is skewed to polar residues. The segment covering 429 to 716 (SSSELSVVPS…SEYTATWTTT (288 aa)) has biased composition (low complexity). An N-linked (GlcNAc...) asparagine glycan is attached at Asn681. Composition is skewed to polar residues over residues 717–729 (NSDG…SGII) and 883–935 (GLST…PVPT). N-linked (GlcNAc...) asparagine glycans are attached at residues Asn891, Asn940, Asn944, Asn948, Asn952, Asn956, Asn960, Asn966, Asn970, Asn974, Asn984, Asn988, Asn992, Asn996, Asn1000, Asn1010, Asn1014, Asn1018, Asn1022, Asn1026, Asn1032, Asn1046, Asn1050, Asn1058, Asn1062, Asn1072, Asn1076, Asn1080, Asn1086, Asn1090, Asn1094, Asn1098, Asn1114, Asn1118, Asn1122, Asn1128, Asn1132, Asn1136, Asn1140, Asn1150, Asn1154, Asn1158, Asn1172, Asn1180, and Asn1186. The span at 941–959 (GSNNGSDNGSNNGSNNGSN) shows a compositional bias: low complexity. Over residues 960–982 (NGSGSGNGSNNGSNNGSGSGNGF) the composition is skewed to gly residues. The span at 983-1043 (NNGSDNGSNN…SNSGSDSGNG (61 aa)) shows a compositional bias: low complexity. The segment covering 1062–1078 (NGSGSGGESNNGSGNGS) has biased composition (gly residues). A compositionally biased stretch (low complexity) spans 1079 to 1097 (DNGSSPDNGSNNGSNNGSN). The segment covering 1139–1167 (NNGSNSGSNSDNGSNNSSGNGSSSDLGSV) has biased composition (low complexity). Composition is skewed to low complexity over residues 1175 to 1194 (NEGS…GAGA) and 1205 to 1217 (SPSA…SSAS). N-linked (GlcNAc...) asparagine glycosylation occurs at Asn1225. Residue Asn1225 is the site of GPI-anchor amidated asparagine attachment. A propeptide spans 1226–1249 (GSGKLLNGKVLTLSVLSSMVVVFL) (removed in mature form).

This sequence belongs to the HYR1/IFF family. The GPI-anchor is attached to the protein in the endoplasmic reticulum and serves to target the protein to the cell surface. There, the glucosamine-inositol phospholipid moiety is cleaved off and the GPI-modified mannoprotein is covalently attached via its lipidless GPI glycan remnant to the 1,6-beta-glucan of the outer cell wall layer.

Its subcellular location is the secreted. The protein localises to the cell wall. It localises to the membrane. In terms of biological role, GPI-anchored cell wall protein involved in cell wall organization, hyphal growth, as well as in host-fungal interaction and virulence. The sequence is that of Hyphally regulated cell wall protein 3 (HYR3) from Candida albicans (strain SC5314 / ATCC MYA-2876) (Yeast).